The primary structure comprises 292 residues: MQKSGIFILNKPKNISTYQLINQVKKKLNIKKVGHCGTLDLLATGVVICLVNNATKISDYLLNANKAYQVKIKLFTLTDSYDGEGNIIQTQIPFDISLDQINKVISKYNNYSYEQYPPIYSSIKVNGKKLYQYALANQDVEIKSRKVTIFKTKLLNYDQKNYEIFLDVKCSKGTYIRSLAIDICKDLNTIGYVVELNRTLSGNFDINSAIDIKDLSWKHLTSIYDAVKINDFKVVKYHNILDVKQGKKIVLNNIKDQLVFISDEQNNILAVYQKYENNIFKVKRGGLNNDIY.

The Nucleophile role is filled by Asp-40.

This sequence belongs to the pseudouridine synthase TruB family. Type 1 subfamily.

The enzyme catalyses uridine(55) in tRNA = pseudouridine(55) in tRNA. Responsible for synthesis of pseudouridine from uracil-55 in the psi GC loop of transfer RNAs. The protein is tRNA pseudouridine synthase B of Mycoplasma capricolum subsp. capricolum (strain California kid / ATCC 27343 / NCTC 10154).